Reading from the N-terminus, the 215-residue chain is Nitrate/nitrite response regulator protein NarP (215 aa).

Positions 8–124 (QVMIVDDHPL…VLLEAIRAGA (117 aa)) constitute a Response regulatory domain. Position 59 is a 4-aspartylphosphate (Asp-59). The HTH luxR-type domain occupies 147-212 (EEDPFSVLTE…AATILFLQQR (66 aa)). A DNA-binding region (H-T-H motif) is located at residues 171–190 (NKQIASVLNISEQTVKVHIR).

This protein activates the expression of the nitrate reductase (narGHJI) and formate dehydrogenase-N (fdnGHI) operons and represses the transcription of the fumarate reductase (frdABCD) operon in response to a nitrate/nitrite induction signal transmitted by either the NarX or NarQ proteins. In Escherichia coli (strain K12), this protein is Nitrate/nitrite response regulator protein NarP (narP).